Consider the following 499-residue polypeptide: Probable aspartyl protease At4g16563 (499 aa).

An N-terminal signal peptide occupies residues 1-26 (MKTCLIFFLYTTILQYYFHFSVSSLS). Residues 83-487 (YLISLSVGSS…DLLNRRVGFA (405 aa)) enclose the Peptidase A1 domain. The active site involves Asp-101. A disulfide bridge links Cys-111 with Cys-119. N-linked (GlcNAc...) asparagine glycosylation is found at Asn-175 and Asn-211. Residue Asp-353 is part of the active site. Cysteines 396 and 445 form a disulfide. N-linked (GlcNAc...) asparagine glycans are attached at residues Asn-400 and Asn-415.

It belongs to the peptidase A1 family.

This is Probable aspartyl protease At4g16563 from Arabidopsis thaliana (Mouse-ear cress).